Reading from the N-terminus, the 147-residue chain is Ras-related protein RabK2 (147 aa).

GTP is bound by residues 11 to 15 and 63 to 66; these read NTHGS and TKSD. Cys145 is lipidated: S-geranylgeranyl cysteine.

This sequence belongs to the small GTPase superfamily. Rab family.

The protein localises to the cell membrane. This chain is Ras-related protein RabK2 (rabK2), found in Dictyostelium discoideum (Social amoeba).